The primary structure comprises 1084 residues: MNTGGRLIAGSHNRNEFVLINADENARIRSVQELSGQTCQICRDEIELTVDGEPFVACNECAFPVCRPCYEYERREGNQACPQCKTRFKRLKGSPRVEGDEEEDDIDDLDNEFEYGNNGIGFDQVSEGMSISRRNSGFPQSDLDSAPPGSQIPLLTYGDEDVEISSDRHALIVPPSLGGHGNRVHPVSLSDPTVAAHPRPMVPQKDLAVYGYGSVAWKDRMEEWKRKQNEKLQVVRHEGDPDFEDGDDADFPMMDEGRQPLSRKIPIKSSKINPYRMLIVLRLVILGLFFHYRILHPVKDAYALWLISVICEIWFAVSWVLDQFPKWYPIERETYLDRLSLRYEKEGKPSGLSPVDVFVSTVDPLKEPPLITANTVLSILAVDYPVDKVACYVSDDGAAMLTFEALSETAEFARKWVPFCKKYCIEPRAPEWYFCHKMDYLKNKVHPAFVRERRAMKRDYEEFKVKINALVATAQKVPEDGWTMQDGTPWPGNSVRDHPGMIQVFLGSDGVRDVENNELPRLVYVSREKRPGFDHHKKAGAMNSLIRVSGVLSNAPYLLNVDCDHYINNSKALREAMCFMMDPQSGKKICYVQFPQRFDGIDRHDRYSNRNVVFFDINMKGLDGLQGPIYVGTGCVFRRQALYGFDAPKKKKGPRKTCNCWPKWCLLCFGSRKNRKAKTVAADKKKKNREASKQIHALENIEEGRVTKGSNVEQSTEAMQMKLEKKFGQSPVFVASARMENGGMARNASPACLLKEAIQVISCGYEDKTEWGKEIGWIYGSVTEDILTGFKMHSHGWRSVYCTPKLAAFKGSAPINLSDRLHQVLRWALGSVEIFLSRHCPIWYGYGGGLKWLERLSYINSVVYPWTSLPLIVYCSLPAICLLTGKFIVPEISNYASILFMALFSSIAITGILEMQWGKVGIDDWWRNEQFWVIGGVSAHLFALFQGLLKVLAGVDTNFTVTSKAADDGEFSDLYLFKWTSLLIPPMTLLIINVIGVIVGVSDAISNGYDSWGPLFGRLFFALWVIIHLYPFLKGLLGKQDRMPTIIVVWSILLASILTLLWVRVNPFVAKGGPILEICGLDCL.

N-acetylmethionine is present on methionine 1. The Cytoplasmic segment spans residues 1-277 (MNTGGRLIAG…KSSKINPYRM (277 aa)). 8 residues coordinate Zn(2+): cysteine 39, cysteine 42, cysteine 58, cysteine 61, cysteine 66, cysteine 69, cysteine 81, and cysteine 84. An RING-type; degenerate zinc finger spans residues 39–85 (CQICRDEIELTVDGEPFVACNECAFPVCRPCYEYERREGNQACPQCK). Residues 278 to 298 (LIVLRLVILGLFFHYRILHPV) form a helical membrane-spanning segment. Residues 299–300 (KD) lie on the Extracellular side of the membrane. The helical transmembrane segment at 301–321 (AYALWLISVICEIWFAVSWVL) threads the bilayer. The Cytoplasmic portion of the chain corresponds to 322–868 (DQFPKWYPIE…INSVVYPWTS (547 aa)). UDP-alpha-D-glucose contacts are provided by serine 360, lysine 366, glutamate 367, and aspartate 396. Residue aspartate 396 is part of the active site. Residues 450-476 (VRERRAMKRDYEEFKVKINALVATAQK) adopt a coiled-coil conformation. Lysine 537 contacts UDP-alpha-D-glucose. Mn(2+)-binding residues include lysine 538 and aspartate 562. A coiled-coil region spans residues 675–703 (RKAKTVAADKKKKNREASKQIHALENIEE). Aspartate 785 is an active-site residue. Residues 869–889 (LPLIVYCSLPAICLLTGKFIV) traverse the membrane as a helical segment. Residues 890-894 (PEISN) are Extracellular-facing. A helical membrane pass occupies residues 895-915 (YASILFMALFSSIAITGILEM). The Cytoplasmic portion of the chain corresponds to 916–930 (QWGKVGIDDWWRNEQ). A helical membrane pass occupies residues 931–951 (FWVIGGVSAHLFALFQGLLKV). Residues 952–980 (LAGVDTNFTVTSKAADDGEFSDLYLFKWT) lie on the Extracellular side of the membrane. N-linked (GlcNAc...) asparagine glycosylation occurs at asparagine 958. The helical transmembrane segment at 981-1001 (SLLIPPMTLLIINVIGVIVGV) threads the bilayer. Topologically, residues 1002-1012 (SDAISNGYDSW) are cytoplasmic. A helical transmembrane segment spans residues 1013–1033 (GPLFGRLFFALWVIIHLYPFL). Residues 1034–1042 (KGLLGKQDR) lie on the Extracellular side of the membrane. The helical transmembrane segment at 1043–1063 (MPTIIVVWSILLASILTLLWV) threads the bilayer. Residues 1064–1084 (RVNPFVAKGGPILEICGLDCL) are Cytoplasmic-facing.

The protein belongs to the glycosyltransferase 2 family. Plant cellulose synthase subfamily. In terms of assembly, interacts with CESA1 and CESA3. Interacts with STL1 and STL2, but not with GOT1. Binds to CSI1 and CSI3. Interacts with PAT24/TIP1. Zn(2+) is required as a cofactor. Mn(2+) serves as cofactor. Post-translationally, S-acylated. Expressed in germinating seeds, seedlings, roots, stems, leaves and flowers. Not present in mature flowers.

It is found in the cell membrane. The catalysed reaction is [(1-&gt;4)-beta-D-glucosyl](n) + UDP-alpha-D-glucose = [(1-&gt;4)-beta-D-glucosyl](n+1) + UDP + H(+). Its pathway is glycan metabolism; plant cellulose biosynthesis. In terms of biological role, catalytic subunit of cellulose synthase terminal complexes ('rosettes'), required for beta-1,4-glucan microfibril crystallization, a major mechanism of the cell wall formation. Involved in the primary cell wall formation. The presence of each protein CESA1 and CESA6 is critical for cell expansion. The hypocotyl elongation is based on a CESA6-dependent cell elongation in dark and a CESA6-independent cell elongation in light. The transition between these two mechanisms requires photosynthesis and PHYB, but not CRY1. The CESA6-dependent cell elongation seems to be independent of gibberellic acid, auxin and ethylene. May be involved in sensitivity to isoxaben. Associates with and moves along cortical microtubules for the process of cellulose deposition. The polypeptide is Cellulose synthase A catalytic subunit 6 [UDP-forming] (Arabidopsis thaliana (Mouse-ear cress)).